A 370-amino-acid polypeptide reads, in one-letter code: Protein STRICTOSIDINE SYNTHASE-LIKE 9 (370 aa).

Positions 1-26 (MPINQKIPTWFAVPAVFAVLSVISYQ) are cleaved as a signal peptide. N-linked (GlcNAc...) asparagine glycans are attached at residues asparagine 97 and asparagine 171.

This sequence belongs to the strictosidine synthase family.

It localises to the vacuole. In Arabidopsis thaliana (Mouse-ear cress), this protein is Protein STRICTOSIDINE SYNTHASE-LIKE 9.